A 259-amino-acid chain; its full sequence is uncharacterized protein (259 aa).

Residues 1–19 (MKLSVKIAGVLTVAAAAMT) constitute a signal peptide (or 26). 214 to 221 (GPYELGKT) contacts ATP.

This is an uncharacterized protein from Bacillus subtilis (strain 168).